Consider the following 337-residue polypeptide: Retrovirus-related Pol polyprotein from type-1 retrotransposable element R1 (337 aa).

Positions 1–118 (GCPQGSISGP…KSARYLGVCM (118 aa)) constitute a Reverse transcriptase domain. A nucleic acid-binding endonuclease region spans residues 253-337 (KRARSCKLMK…ACPCGAPRED (85 aa)).

It carries out the reaction DNA(n) + a 2'-deoxyribonucleoside 5'-triphosphate = DNA(n+1) + diphosphate. The polypeptide is Retrovirus-related Pol polyprotein from type-1 retrotransposable element R1 (Nasonia vitripennis (Parasitic wasp)).